Consider the following 79-residue polypeptide: MATIQVRDLPEDVAETYRRRATAAGQSLQTYMRTKLIEGVRGRDKAEAIEILEQALASTASPGISRETIEASRRELRGG.

Functionally, antitoxin component of a possible type II toxin-antitoxin (TA) system. The cognate toxin is VapC1. This is Putative antitoxin VapB1 (vapB1) from Mycobacterium tuberculosis (strain ATCC 25618 / H37Rv).